Reading from the N-terminus, the 1223-residue chain is WD repeat-containing protein 11 (1223 aa).

WD repeat units lie at residues 59 to 108 (KHKA…AQCE) and 111 to 154 (EHVK…KLWK). Ser-205 and Ser-209 each carry phosphoserine. A WD 3 repeat occupies 354-393 (KTVRPFSMVCCPVNENAAALIVSDGRVMIWELKSAVCSRN). Residues Ser-401 and Ser-405 each carry the phosphoserine modification. WD repeat units lie at residues 470 to 509 (RMCP…LHKE), 565 to 604 (NDES…LLRE), 707 to 744 (GSMG…SRGI), 746 to 786 (THRS…MVSS), 792 to 830 (NVTF…TCFR), and 892 to 939 (ALSN…HSLS).

Component of the complex WDR11 composed of C17orf75, FAM91A1 and WDR11; FAM91A1 and WDR11 are required for proper location of the complex. Interacts with GLI3; the interaction associateS EMX1 with GLI3. Interacts with TBC1D23; this interaction may be indirect and recruits TBC1D23 to AP-1-derived vesicles. Interacts (via the N-terminal and the central portion of the protein) with EMX1. In terms of tissue distribution, broadly expressed in various organs including brain, eye,ear, lung, heart, kideny and gonads. Cerebral cortex. The entire developing central nervous system, except for the spinal cord, reveals expression. Expressed in the neuroepithelium, including the diencephalic region that gives rise to hypothalamic neurons. In the adult brain, intense expression is restricted to the olfactory bulb, the olfaction-related piriform cortex, the granule cell layer of the cerebellum, and neurons of the hippocampal formation. The brain demonstrated expression scattered throughout the hypothalamus, sometimes in clusters of neurons.

It is found in the cytoplasm. The protein resides in the cytoskeleton. The protein localises to the cilium basal body. Its subcellular location is the nucleus. It localises to the cilium axoneme. It is found in the cytoplasmic vesicle. The protein resides in the golgi apparatus. The protein localises to the trans-Golgi network. Functionally, involved in the Hedgehog (Hh) signaling pathway, is essential for normal ciliogenesis. Regulates the proteolytic processing of GLI3 and cooperates with the transcription factor EMX1 in the induction of downstream Hh pathway gene expression and gonadotropin-releasing hormone production. WDR11 complex facilitates the tethering of Adaptor protein-1 complex (AP-1)-derived vesicles. WDR11 complex acts together with TBC1D23 to facilitate the golgin-mediated capture of vesicles generated using AP-1. The sequence is that of WD repeat-containing protein 11 (Wdr11) from Mus musculus (Mouse).